The chain runs to 247 residues: MNLLLILTFVAAAVAAPFDDDDKIVGGYICEENSVPYQVSLNSGYHFCGGSLISEQWVVSAGHCYKSRIQVRLGEHNIEVLEGNEQFINAAKIIRHPKYNSRTLDNDILLIKLSSPAVINSRVSAISLPTAPPAAGTESLISGWGNTLSSGADYPDELQCLDAPVLSQAECEASYPGKITNNMFCVGFLEGGKDSCQGDSGGPVVSNGELQGIVSWGYGCAQKNRPGVYTKVYNYVDWIKDTIAANS.

Positions M1–A15 are cleaved as a signal peptide. Positions A16–K23 are cleaved as a propeptide — activation peptide. Residues I24–A244 enclose the Peptidase S1 domain. 4 disulfide bridges follow: C30/C160, C48/C64, C171/C185, and C196/C220. H63 serves as the catalytic Charge relay system. 4 residues coordinate Ca(2+): E75, N77, V80, and E85. D107 functions as the Charge relay system in the catalytic mechanism. Sulfotyrosine is present on Y154. S200 serves as the catalytic Charge relay system.

Belongs to the peptidase S1 family. Ca(2+) is required as a cofactor. Sulfated on tyrosine. Post-translationally, sulfation at Tyr-154 increases selectivity towards basic versus apolar residues at the P2' position of inhibitors that bind in a substrate-like fashion. Although the increase in selectivity is relatively small, it may facilitate digestion of a broader range of dietary proteins. As to expression, expressed in Paneth cells, at the base of small intestinal crypts.

It is found in the secreted. The protein resides in the extracellular space. The enzyme catalyses Preferential cleavage: Arg-|-Xaa, Lys-|-Xaa.. In the ileum, may be involved in defensin processing, including DEFA5. The chain is Trypsin-2 (PRSS2) from Homo sapiens (Human).